We begin with the raw amino-acid sequence, 563 residues long: Cytochrome P450 monooxygenase efuG (563 aa).

A helical transmembrane segment spans residues 10–30 (ITSHQWGIGSVFLLISIPLIV). The disordered stretch occupies residues 462–482 (PDDPQSGPRKDAKKQKAKSDG). Cys505 is a binding site for heme.

Belongs to the cytochrome P450 family. The cofactor is heme.

The protein resides in the membrane. Its pathway is secondary metabolite biosynthesis; terpenoid biosynthesis. Cytochrome P450 monooxygenase; part of the gene cluster that mediates the biosynthesis of enfumafungin, a glycosylated fernene-type triterpenoid with potent antifungal activity, mediated by its interaction with beta-1,3-glucan synthase and the fungal cell wall. The pathway begins with the terpene cyclase-glycosyl transferase fusion protein that most likely uses 2,3-oxidosqualene as substrate and catalyzes glycosylation immediately after cyclization. The fernene glycoside then could be processed by the desaturase efuI which catalyzes isomerization of a double bond established by efuA to form the core structure. The latter would then undergo a series of hydroxylations in unknown order at C-2, C-19, C-23 and C-25, which would be catalyzed by two of the three cytochrome P450 monooxygenases efuB, efuG or efuH. The hydroxy-group at C-25 becomes oxidized by the dehydrogenase efuE to enable a spontaneous, non-enzymatic hemiacetal formation with C-23. After hydroxylation at C-2, acetylation by the acetyltransferase efuC takes place. The final steps in enfumafungin biosynthesis require expansion of the 5-membered ring by lactonization via a Baeyer-Villiger reaction mediated by one of the BGC's cytochrome P450 monooxygenases (efuB, efuG or efuH) followed by ring cleavage. This type of reaction would establish a double bond between C-20 and C-21 which could be reduced by the reductase efuL to form the final product. The sequence is that of Cytochrome P450 monooxygenase efuG from Hormonema carpetanum.